The sequence spans 358 residues: Fructose-bisphosphate aldolase (358 aa).

Ser-62 lines the D-glyceraldehyde 3-phosphate pocket. The Proton donor role is filled by Asp-109. 4 residues coordinate Zn(2+): His-110, Asp-144, Glu-174, and His-226. Dihydroxyacetone phosphate is bound at residue Gly-227. Residue His-264 participates in Zn(2+) binding. Dihydroxyacetone phosphate is bound by residues 265–267 (GGS) and 286–289 (NIDT).

This sequence belongs to the class II fructose-bisphosphate aldolase family. It depends on Zn(2+) as a cofactor.

The catalysed reaction is beta-D-fructose 1,6-bisphosphate = D-glyceraldehyde 3-phosphate + dihydroxyacetone phosphate. It functions in the pathway carbohydrate degradation; glycolysis; D-glyceraldehyde 3-phosphate and glycerone phosphate from D-glucose: step 4/4. Functionally, catalyzes the aldol condensation of dihydroxyacetone phosphate (DHAP or glycerone-phosphate) with glyceraldehyde 3-phosphate (G3P) to form fructose 1,6-bisphosphate (FBP) in gluconeogenesis and the reverse reaction in glycolysis. This is Fructose-bisphosphate aldolase (fba) from Edwardsiella ictaluri (strain 93-146).